Consider the following 248-residue polypeptide: Probable transcriptional regulatory protein Nham_3525 (248 aa).

A disordered region spans residues Met1–Lys21.

Belongs to the TACO1 family.

The protein localises to the cytoplasm. The sequence is that of Probable transcriptional regulatory protein Nham_3525 from Nitrobacter hamburgensis (strain DSM 10229 / NCIMB 13809 / X14).